A 578-amino-acid polypeptide reads, in one-letter code: MTTGGLVDENDGAAMRPLRHTLSQLRLHELLVEVQDRVEQIVEGRDRLDGLVEAMLVVTAGLDLEATLRAIVHSATSLVDARYGAMEVHDRQHRVLHFVYEGIDEETVRRIGHLPKGLGVIGLLIEDPKPLRLDDVSAHPASIGFPPYHPPMRTFLGVPVRVRDESFGTLYLTDKTNGQPFSDDDEVLVQALAAAAGIAVANARLYQQAKARQSWIEATRDIATELLSGTEPATVFRLVAAEALKLTAADAALVAVPVDEDMPAADVGELLVIETVGSAVASIVGRTIPVAGAVLREVFVNGIPRRVDRVDLEGLDELADAGPALLLPLRARGTVAGVVVVLSQGGPGAFTDEQLEMMAAFADQAALAWQLATSQRRMRELDVLTDRDRIARDLHDHVIQRLFAIGLALQGAVPHERNPEVQQRLSDVVDDLQDVIQEIRTTIYDLHGASQGITRLRQRIDAAVAQFADSGLRTSVQFVGPLSVVDSALADQAEAVVREAVSNAVRHAKASTLTVRVKVDDDLCIEVTDNGRGLPDEFTGSGLTNLRQRAEQAGGEFTLASVPGASGTVLRWSAPLSQ.

2 consecutive GAF domains span residues 63-200 (DLEA…GIAV) and 231-369 (EPAT…ALAW). A heme-binding site is contributed by His-149. The region spanning 383-578 (VLTDRDRIAR…VLRWSAPLSQ (196 aa)) is the Histidine kinase domain. His-395 carries the phosphohistidine; by autocatalysis modification.

Requires Mg(2+) as cofactor. It depends on heme as a cofactor.

It localises to the cytoplasm. The enzyme catalyses ATP + protein L-histidine = ADP + protein N-phospho-L-histidine.. Its function is as follows. Member of the two-component regulatory system DevR/DevS (DosR/DosS) involved in onset of the dormancy response. Regulates an approximately 48-member regulon. Required for full induction of the DevR (DosR) regulon; acts later than DosT to positively regulate expression of the DevR regulon during adaptation to anaerobiosis. Characterized as an oxygen sensor; O(2) acts as a switch, with O(2)-bound Fe(2+) protein inactive in autophosphorylation. Has also been suggested to act as a redox sensor, or perhaps as a dual oxygen/redox sensor. Donates a phosphate group to transcriptional regulator DevR (DosR). This is Oxygen sensor histidine kinase response regulator DevS/DosS (devS) from Mycobacterium tuberculosis (strain CDC 1551 / Oshkosh).